The primary structure comprises 487 residues: Cytochrome P450 2C21 (487 aa).

C432 serves as a coordination point for heme.

This sequence belongs to the cytochrome P450 family. The cofactor is heme. As to expression, liver.

The protein localises to the endoplasmic reticulum membrane. It localises to the microsome membrane. It catalyses the reaction an organic molecule + reduced [NADPH--hemoprotein reductase] + O2 = an alcohol + oxidized [NADPH--hemoprotein reductase] + H2O + H(+). Functionally, cytochromes P450 are a group of heme-thiolate monooxygenases. In liver microsomes, this enzyme is involved in an NADPH-dependent electron transport pathway. It oxidizes a variety of structurally unrelated compounds, including steroids, fatty acids, and xenobiotics. Showed testosterone hydrolase activity. The protein is Cytochrome P450 2C21 (CYP2C21) of Canis lupus familiaris (Dog).